The sequence spans 114 residues: Large ribosomal subunit protein P1 (114 aa).

The segment at 55 to 114 (EEAAAAPAAAPAASGSDDEAAADDGDDDEEADADEAAEAEDAGDDDDEEPSGEGLGDLFG) is disordered. The span at 56–69 (EAAAAPAAAPAASG) shows a compositional bias: low complexity. Acidic residues predominate over residues 70–105 (SDDEAAADDGDDDEEADADEAAEAEDAGDDDDEEPS).

Belongs to the eukaryotic ribosomal protein P1/P2 family. Part of the 50S ribosomal subunit. Homodimer, it forms part of the ribosomal stalk which helps the ribosome interact with GTP-bound translation factors. Forms a heptameric uL10/P0(P1)2(P1)2(P1)2 complex, where uL10/P0 forms an elongated spine to which the P1 dimers bind in a sequential fashion.

Its function is as follows. Forms part of the ribosomal stalk, playing a central role in the interaction of the ribosome with GTP-bound translation factors. This chain is Large ribosomal subunit protein P1, found in Halobacterium salinarum (strain ATCC 700922 / JCM 11081 / NRC-1) (Halobacterium halobium).